The primary structure comprises 270 residues: Bis(5'-nucleosyl)-tetraphosphatase, symmetrical (270 aa).

Belongs to the Ap4A hydrolase family.

It catalyses the reaction P(1),P(4)-bis(5'-adenosyl) tetraphosphate + H2O = 2 ADP + 2 H(+). Its function is as follows. Hydrolyzes diadenosine 5',5'''-P1,P4-tetraphosphate to yield ADP. The sequence is that of Bis(5'-nucleosyl)-tetraphosphatase, symmetrical from Thioalkalivibrio sulfidiphilus (strain HL-EbGR7).